A 20-amino-acid chain; its full sequence is QELASFHSVSKGFMGECGFR.

N6-(pyridoxal phosphate)lysine is present on Lys11. N-linked (Glc) (glycation) lysine; in vitro glycosylation occurs at Lys11.

Belongs to the class-I pyridoxal-phosphate-dependent aminotransferase family. Alanine aminotransferase subfamily. Homodimer. It depends on pyridoxal 5'-phosphate as a cofactor. Post-translationally, glycation of Lys-11 inactivates the enzyme.

The protein localises to the cytoplasm. It catalyses the reaction L-alanine + 2-oxoglutarate = pyruvate + L-glutamate. It functions in the pathway amino-acid degradation; L-alanine degradation via transaminase pathway; pyruvate from L-alanine: step 1/1. Its function is as follows. Catalyzes the reversible transamination between alanine and 2-oxoglutarate to form pyruvate and glutamate. Participates in cellular nitrogen metabolism and also in liver gluconeogenesis starting with precursors transported from skeletal muscles. The chain is Alanine aminotransferase 1 (GPT) from Sus scrofa (Pig).